The sequence spans 1483 residues: Neuropathy target esterase sws (1483 aa).

Over Met-1–Thr-34 the chain is Lumenal. The helical transmembrane segment at Met-35 to Phe-55 threads the bilayer. Topologically, residues Lys-56–Asn-1483 are cytoplasmic. Ile-174–Arg-301 provides a ligand contact to a nucleoside 3',5'-cyclic phosphate. 2 disordered regions span residues Ala-348 to Asn-380 and Ser-404 to Ile-440. The span at Gly-413–Ile-440 shows a compositional bias: polar residues. Phosphoserine occurs at positions 418 and 424. Residues Glu-456–Arg-585 and Ile-574–Arg-701 each bind a nucleoside 3',5'-cyclic phosphate. The PNPLA domain maps to Leu-927 to Arg-1093. The GXGXXG signature appears at Gly-931 to Gly-936. The GXSXG motif lies at Gly-958–Gly-962. Ser-960 serves as the catalytic Nucleophile. Asp-1080 (proton acceptor) is an active-site residue. The DGA/G motif lies at Asp-1080–Gly-1082. Ser-1174 is subject to Phosphoserine. Positions Asp-1349–Asn-1483 are disordered. Polar residues predominate over residues Ala-1351–Asn-1373. Positions Lys-1382–Glu-1396 are enriched in basic and acidic residues. Residues Glu-1410–Ser-1419 show a composition bias toward low complexity. A compositionally biased stretch (basic and acidic residues) spans Leu-1445–Pro-1458. The span at Gln-1465 to Glu-1474 shows a compositional bias: low complexity.

It belongs to the NTE family. As to quaternary structure, interacts with Pka-C3; interaction inhibits the catalytic function of Pka-C3 and the esterase activity of sws.

It localises to the endoplasmic reticulum membrane. It carries out the reaction a 1-acyl-sn-glycero-3-phosphocholine + H2O = sn-glycerol 3-phosphocholine + a fatty acid + H(+). In terms of biological role, phospholipase B that deacylates intracellular phosphatidylcholine (PtdCho), generating glycerophosphocholine (GroPtdCho). This deacylation occurs at both sn-2 and sn-1 positions of PtdCho. Its specific chemical modification by certain organophosphorus (OP) compounds leads to distal axonopathy. Plays a role in the signaling mechanism between neurons and glia that regulates glia wrapping during development of the adult brain. Essential for membrane lipid homeostasis and cell survival in both neurons and glia of the adult brain. The polypeptide is Neuropathy target esterase sws (Drosophila virilis (Fruit fly)).